Consider the following 545-residue polypeptide: Hyaluronidase PH-20 (545 aa).

The N-terminal stretch at 1–35 (MGVLKFKHIFFGSAVELSGVFQIVFIFLLIPCCLT) is a signal peptide. Cystine bridges form between Cys60–Cys355 and Cys224–Cys239. Residue Asn82 is glycosylated (N-linked (GlcNAc...) asparagine). Catalysis depends on Glu148, which acts as the Proton donor. Asn180 carries an N-linked (GlcNAc...) asparagine glycan. Asn372 carries an N-linked (GlcNAc...) asparagine glycan. Cystine bridges form between Cys380-Cys391, Cys385-Cys439, and Cys441-Cys468.

This sequence belongs to the glycosyl hydrolase 56 family. As to expression, testis.

It localises to the cell membrane. It catalyses the reaction Random hydrolysis of (1-&gt;4)-linkages between N-acetyl-beta-D-glucosamine and D-glucuronate residues in hyaluronate.. In terms of biological role, involved in sperm-egg adhesion. Upon fertilization sperm must first penetrate a layer of cumulus cells that surrounds the egg before reaching the zona pellucida. The cumulus cells are embedded in a matrix containing hyaluronic acid which is formed prior to ovulation. This protein aids in penetrating the layer of cumulus cells by digesting hyaluronic acid. The sequence is that of Hyaluronidase PH-20 (SPAM1) from Oryctolagus cuniculus (Rabbit).